The sequence spans 535 residues: WD repeat-containing protein 25 (535 aa).

Disordered regions lie at residues 1–108 and 141–160; these read MASL…PRPS and DQSTFESTAGNASSSQRKRG. Over residues 141-155 the composition is skewed to polar residues; the sequence is DQSTFESTAGNASSS. WD repeat units lie at residues 235–277, 281–320, 321–362, 365–411, 415–454, 460–501, and 504–535; these read GHRG…HCLQ, VHSEAVRAARWSPCGRRILSGGFDFALHLTDLETGTQVFS, GQSD…VVKG, ATIQ…KISN, HERYTCPSLALHPREPVFLAQTNGNYLALFSSVWPYRMSR, GHKV…RACT, and GHTQACLGTTYHPVLPSVLGTCSWGGDIKIWH.

In Mus musculus (Mouse), this protein is WD repeat-containing protein 25 (Wdr25).